The chain runs to 116 residues: Putative antiporter subunit mnhC2 (116 aa).

Transmembrane regions (helical) follow at residues L3–V23, I28–N48, and A72–V92.

Belongs to the CPA3 antiporters (TC 2.A.63) subunit C family. In terms of assembly, may form a heterooligomeric complex that consists of seven subunits: mnhA2, mnhB2, mnhC2, mnhD2, mnhE2, mnhF2 and mnhG2.

The protein localises to the cell membrane. This Staphylococcus saprophyticus subsp. saprophyticus (strain ATCC 15305 / DSM 20229 / NCIMB 8711 / NCTC 7292 / S-41) protein is Putative antiporter subunit mnhC2 (mnhC2).